Consider the following 354-residue polypeptide: Uroporphyrinogen decarboxylase (354 aa).

Substrate contacts are provided by residues 27 to 31 (RQAGR), D77, Y154, T209, and H327.

The protein belongs to the uroporphyrinogen decarboxylase family. In terms of assembly, homodimer.

It is found in the cytoplasm. The catalysed reaction is uroporphyrinogen III + 4 H(+) = coproporphyrinogen III + 4 CO2. It participates in porphyrin-containing compound metabolism; protoporphyrin-IX biosynthesis; coproporphyrinogen-III from 5-aminolevulinate: step 4/4. Catalyzes the decarboxylation of four acetate groups of uroporphyrinogen-III to yield coproporphyrinogen-III. This chain is Uroporphyrinogen decarboxylase, found in Histophilus somni (strain 2336) (Haemophilus somnus).